Reading from the N-terminus, the 1035-residue chain is Potassium-transporting ATPase alpha chain 1 (1035 aa).

The tract at residues Met1–Glu41 is disordered. Residues Met1–Pro98 lie on the Cytoplasmic side of the membrane. Phosphotyrosine occurs at positions 7 and 10. Basic residues predominate over residues Met26–Lys40. Residue Ser27 is modified to Phosphoserine. A helical membrane pass occupies residues Glu99–Ala119. Over Ala120 to Tyr142 the chain is Lumenal. A helical membrane pass occupies residues Leu143–Phe163. Residues Lys164–Ile299 lie on the Cytoplasmic side of the membrane. The helical transmembrane segment at Glu300–Ile319 threads the bilayer. Over Val320–Ala331 the chain is Lumenal. The chain crosses the membrane as a helical span at residues Met332–Ala349. K(+) is bound by residues Val340, Ala341, Val343, and Glu345. Over Thr350–Leu783 the chain is Cytoplasmic. The 4-aspartylphosphate intermediate role is filled by Asp387. Mg(2+)-binding residues include Asp387 and Thr389. Phosphoserine occurs at positions 463 and 601. Mg(2+)-binding residues include Asp728 and Asp732. Residues Lys784–Ile803 traverse the membrane as a helical segment. Glu797 serves as a coordination point for K(+). Residues Tyr804 to Leu813 are Lumenal-facing. The helical transmembrane segment at Gly814 to Ala834 threads the bilayer. Glu822 is a binding site for K(+). Residues Tyr835 to Arg854 lie on the Cytoplasmic side of the membrane. A Phosphoserine modification is found at Ser840. Residues Leu855–Phe877 form a helical membrane-spanning segment. Residues Thr878–Cys929 are Lumenal-facing. A helical transmembrane segment spans residues Tyr930 to Lys949. Residues Thr950 to Asn963 are Cytoplasmic-facing. Ser954 carries the phosphoserine; by PKA modification. The chain crosses the membrane as a helical span at residues Lys964–Tyr982. Residues Cys983 to Phe997 lie on the Lumenal side of the membrane. A helical transmembrane segment spans residues Gln998–Lys1018. Topologically, residues Leu1019 to Tyr1035 are cytoplasmic.

Belongs to the cation transport ATPase (P-type) (TC 3.A.3) family. Type IIC subfamily. As to quaternary structure, the gastric H(+)/K(+) ATPase pump is composed of the catalytic alpha subunit ATP4A and the regulatory beta subunit ATP4B. Interacts (via the P-domain) with ATP4B (via N-terminus); this interaction stabilizes the lumenal-open E2 conformation state and prevents the reverse reaction of the transport cycle. In terms of tissue distribution, expressed in gastric parietal cells (at protein level).

The protein resides in the apical cell membrane. The enzyme catalyses K(+)(out) + ATP + H2O + H(+)(in) = K(+)(in) + ADP + phosphate + 2 H(+)(out). Its function is as follows. The catalytic subunit of the gastric H(+)/K(+) ATPase pump which transports H(+) ions in exchange for K(+) ions across the apical membrane of parietal cells. Uses ATP as an energy source to pump H(+) ions to the gastric lumen while transporting K(+) ion from the lumen into the cell. Remarkably generates a million-fold proton gradient across the gastric parietal cell membrane, acidifying the gastric juice down to pH 1. Within a transport cycle, the transfer of a H(+) ion across the membrane is coupled to ATP hydrolysis and is associated with a transient phosphorylation that shifts the pump conformation from inward-facing (E1) to outward-facing state (E2). The release of the H(+) ion in the stomach lumen is followed by binding of K(+) ion converting the pump conformation back to the E1 state. This chain is Potassium-transporting ATPase alpha chain 1, found in Homo sapiens (Human).